A 587-amino-acid chain; its full sequence is 5-aminolevulinate synthase, erythroid-specific, mitochondrial (587 aa).

Residues 1–49 constitute a mitochondrion transit peptide; sequence MVAAAMLLRSCPVLSQGPTGLLGKVAKTYQFLFSIGRCPILATQGPTCS. Arg163 is a succinyl-CoA binding site. Residues Cys258 and Phe259 each contribute to the pyridoxal 5'-phosphate site. Ser280 and Lys299 together coordinate succinyl-CoA. Pyridoxal 5'-phosphate is bound by residues Ser332, His360, and Thr388. Lys391 is a catalytic residue. Lys391 is subject to N6-(pyridoxal phosphate)lysine. The pyridoxal 5'-phosphate site is built by Thr420 and Thr421. Thr508 contributes to the succinyl-CoA binding site.

The protein belongs to the class-II pyridoxal-phosphate-dependent aminotransferase family. Homodimer. Interacts with SUCLA2. Pyridoxal 5'-phosphate is required as a cofactor. As to expression, predomnantly expressed in erythroid cells.

The protein resides in the mitochondrion inner membrane. It localises to the mitochondrion. It catalyses the reaction succinyl-CoA + glycine + H(+) = 5-aminolevulinate + CO2 + CoA. It functions in the pathway porphyrin-containing compound metabolism; protoporphyrin-IX biosynthesis; 5-aminolevulinate from glycine: step 1/1. In terms of biological role, catalyzes the pyridoxal 5'-phosphate (PLP)-dependent condensation of succinyl-CoA and glycine to form aminolevulinic acid (ALA), with CoA and CO2 as by-products. Contributes significantly to heme formation during erythropoiesis. This chain is 5-aminolevulinate synthase, erythroid-specific, mitochondrial (Alas2), found in Mus musculus (Mouse).